Here is a 129-residue protein sequence, read N- to C-terminus: Large ribosomal subunit protein bL12 (129 aa).

This sequence belongs to the bacterial ribosomal protein bL12 family. As to quaternary structure, homodimer. Part of the ribosomal stalk of the 50S ribosomal subunit. Forms a multimeric L10(L12)X complex, where L10 forms an elongated spine to which 2 to 4 L12 dimers bind in a sequential fashion. Binds GTP-bound translation factors.

In terms of biological role, forms part of the ribosomal stalk which helps the ribosome interact with GTP-bound translation factors. Is thus essential for accurate translation. The chain is Large ribosomal subunit protein bL12 from Treponema pallidum (strain Nichols).